The primary structure comprises 101 residues: MMLEHVLVLSAYLLSIGIYGLITSRNMVRALMCLELILNAVNMNFVTFSDLFDSRQIKGDIFSIFVIAIAAAEAAIGLAIVSSIYRNRKSTRINQSNLLNK.

3 helical membrane-spanning segments follow: residues 2–22 (MLEHVLVLSAYLLSIGIYGLI), 32–52 (MCLELILNAVNMNFVTFSDLF), and 61–81 (IFSIFVIAIAAAEAAIGLAIV).

Belongs to the complex I subunit 4L family. NDH is composed of at least 16 different subunits, 5 of which are encoded in the nucleus.

The protein resides in the plastid. The protein localises to the chloroplast thylakoid membrane. The catalysed reaction is a plastoquinone + NADH + (n+1) H(+)(in) = a plastoquinol + NAD(+) + n H(+)(out). It carries out the reaction a plastoquinone + NADPH + (n+1) H(+)(in) = a plastoquinol + NADP(+) + n H(+)(out). Its function is as follows. NDH shuttles electrons from NAD(P)H:plastoquinone, via FMN and iron-sulfur (Fe-S) centers, to quinones in the photosynthetic chain and possibly in a chloroplast respiratory chain. The immediate electron acceptor for the enzyme in this species is believed to be plastoquinone. Couples the redox reaction to proton translocation, and thus conserves the redox energy in a proton gradient. This Nandina domestica (Heavenly bamboo) protein is NAD(P)H-quinone oxidoreductase subunit 4L, chloroplastic.